The primary structure comprises 341 residues: Trans-3-hydroxy-L-proline dehydratase (341 aa).

The Proton acceptor role is filled by S90. Substrate is bound by residues 91–92 (GS), D252, and 257–258 (GT).

It belongs to the proline racemase family.

The catalysed reaction is trans-3-hydroxy-L-proline = 1-pyrroline-2-carboxylate + H2O. In terms of biological role, catalyzes the dehydration of trans-3-hydroxy-L-proline (t3LHyp) to Delta(1)-pyrroline-2-carboxylate (Pyr2C). May be involved in a degradation pathway of t3LHyp, which would allow L.aggregata to grow on t3LHyp as a sole carbon source. Displays neither proline racemase activity nor 4-hydroxyproline 2-epimerase activity. The sequence is that of Trans-3-hydroxy-L-proline dehydratase from Roseibium aggregatum (strain ATCC 25650 / DSM 13394 / JCM 20685 / NBRC 16684 / NCIMB 2208 / IAM 12614 / B1) (Stappia aggregata).